An 88-amino-acid polypeptide reads, in one-letter code: Small ribosomal subunit protein eS21 (88 aa).

It belongs to the eukaryotic ribosomal protein eS21 family. In terms of assembly, component of the small ribosomal subunit. Mature ribosomes consist of a small (40S) and a large (60S) subunit. The 40S subunit contains about 33 different proteins and 1 molecule of RNA (18S). The 60S subunit contains about 49 different proteins and 3 molecules of RNA (25S, 5.8S and 5S).

Its subcellular location is the cytoplasm. Functionally, required for the processing of the 20S rRNA-precursor to mature 18S rRNA in a late step of the maturation of 40S ribosomal subunits. Has a physiological role leading to 18S rRNA stability. This Aspergillus fumigatus (strain ATCC MYA-4609 / CBS 101355 / FGSC A1100 / Af293) (Neosartorya fumigata) protein is Small ribosomal subunit protein eS21 (rps21).